Consider the following 458-residue polypeptide: RuvB-like helicase 1 (458 aa).

Residues 1 to 18 (MVQITEVKENQSSRESRT) show a composition bias toward basic and acidic residues. Positions 1–20 (MVQITEVKENQSSRESRTAA) are disordered. An ATP-binding site is contributed by 73–80 (GPPATGKT).

It belongs to the RuvB family. As to quaternary structure, may form heterododecamers with RVB2. Component of the SWR1 chromatin remodeling complex, the INO80 chromatin remodeling complex, and of the R2TP complex.

It localises to the nucleus. It catalyses the reaction ATP + H2O = ADP + phosphate + H(+). In terms of biological role, DNA helicase which participates in several chromatin remodeling complexes, including the SWR1 and the INO80 complexes. The SWR1 complex mediates the ATP-dependent exchange of histone H2A for the H2A variant HZT1 leading to transcriptional regulation of selected genes by chromatin remodeling. The INO80 complex remodels chromatin by shifting nucleosomes and is involved in DNA repair. Also involved in pre-rRNA processing. This is RuvB-like helicase 1 (RVB1) from Candida albicans (strain SC5314 / ATCC MYA-2876) (Yeast).